Reading from the N-terminus, the 144-residue chain is UPF0179 protein PF1381 (144 aa).

This sequence belongs to the UPF0179 family.

The polypeptide is UPF0179 protein PF1381 (Pyrococcus furiosus (strain ATCC 43587 / DSM 3638 / JCM 8422 / Vc1)).